A 302-amino-acid chain; its full sequence is Oxygen-dependent coproporphyrinogen-III oxidase (302 aa).

Ser94 lines the substrate pocket. His98 and His108 together coordinate a divalent metal cation. His108 (proton donor) is an active-site residue. 110 to 112 (NVR) lines the substrate pocket. Residues His147 and His177 each contribute to the a divalent metal cation site. The important for dimerization stretch occupies residues 242 to 277 (YVEFNLVYDRGTLFGLQTGGRTESILMSMPPLARWE). 260–262 (GGR) contributes to the substrate binding site.

It belongs to the aerobic coproporphyrinogen-III oxidase family. As to quaternary structure, homodimer. It depends on a divalent metal cation as a cofactor.

Its subcellular location is the cytoplasm. The enzyme catalyses coproporphyrinogen III + O2 + 2 H(+) = protoporphyrinogen IX + 2 CO2 + 2 H2O. The protein operates within porphyrin-containing compound metabolism; protoporphyrin-IX biosynthesis; protoporphyrinogen-IX from coproporphyrinogen-III (O2 route): step 1/1. Its function is as follows. Involved in the heme biosynthesis. Catalyzes the aerobic oxidative decarboxylation of propionate groups of rings A and B of coproporphyrinogen-III to yield the vinyl groups in protoporphyrinogen-IX. This Aeromonas hydrophila subsp. hydrophila (strain ATCC 7966 / DSM 30187 / BCRC 13018 / CCUG 14551 / JCM 1027 / KCTC 2358 / NCIMB 9240 / NCTC 8049) protein is Oxygen-dependent coproporphyrinogen-III oxidase.